Here is a 239-residue protein sequence, read N- to C-terminus: Phosphoglycolate phosphatase (239 aa).

The Nucleophile role is filled by Asp9. Mg(2+) is bound by residues Asp9 and Asp11. Lys157 is a binding site for substrate. 2 residues coordinate Mg(2+): Asp180 and Asp184.

Belongs to the archaeal SPP-like hydrolase family. It depends on Mg(2+) as a cofactor.

The catalysed reaction is 2-phosphoglycolate + H2O = glycolate + phosphate. In terms of biological role, catalyzes the dephosphorylation of 2-phosphoglycolate. The chain is Phosphoglycolate phosphatase from Thermococcus kodakarensis (strain ATCC BAA-918 / JCM 12380 / KOD1) (Pyrococcus kodakaraensis (strain KOD1)).